A 269-amino-acid polypeptide reads, in one-letter code: Tungstate-binding protein TupA (269 aa).

The signal sequence occupies residues 1–17 (MKKIISLALALALSASA).

The complex is composed of two ATP-binding proteins (TupC), two transmembrane proteins (TupB) and a solute-binding protein (TupA).

It is found in the periplasm. Functionally, part of an ABC transporter complex involved in ultra-high affinity tungstate uptake. Specifically binds tungstate. The protein is Tungstate-binding protein TupA of Campylobacter jejuni subsp. jejuni serotype O:2 (strain ATCC 700819 / NCTC 11168).